We begin with the raw amino-acid sequence, 406 residues long: Cysteine desulfurase (406 aa).

N6-(pyridoxal phosphate)lysine is present on lysine 226. Cysteine 364 serves as the catalytic Cysteine persulfide intermediate.

The protein belongs to the class-V pyridoxal-phosphate-dependent aminotransferase family. Csd subfamily. Homodimer. Interacts with SufE and the SufBCD complex composed of SufB, SufC and SufD. The interaction with SufE is required to mediate the direct transfer of the sulfur atom from the S-sulfanylcysteine. Pyridoxal 5'-phosphate is required as a cofactor.

It is found in the cytoplasm. The catalysed reaction is (sulfur carrier)-H + L-cysteine = (sulfur carrier)-SH + L-alanine. It catalyses the reaction L-selenocysteine + AH2 = hydrogenselenide + L-alanine + A + H(+). It participates in cofactor biosynthesis; iron-sulfur cluster biosynthesis. Its function is as follows. Cysteine desulfurases mobilize the sulfur from L-cysteine to yield L-alanine, an essential step in sulfur metabolism for biosynthesis of a variety of sulfur-containing biomolecules. Component of the suf operon, which is activated and required under specific conditions such as oxidative stress and iron limitation. Acts as a potent selenocysteine lyase in vitro, that mobilizes selenium from L-selenocysteine. Selenocysteine lyase activity is however unsure in vivo. The chain is Cysteine desulfurase from Yersinia pestis bv. Antiqua (strain Antiqua).